The following is a 259-amino-acid chain: Bisphosphoglycerate mutase (259 aa).

Ser-2 bears the N-acetylserine mark. Residues 10–17 (RHGEGQWN), 23–24 (CS), Arg-62, 89–92 (ERHY), Arg-100, and 116–117 (RR) each bind substrate. His-11 functions as the Tele-phosphohistidine intermediate in the catalytic mechanism. The active-site Proton donor/acceptor is Glu-89. Thr-122 carries the post-translational modification Phosphothreonine. 189–190 (GN) is a substrate binding site.

This sequence belongs to the phosphoglycerate mutase family. BPG-dependent PGAM subfamily. Homodimer. In terms of tissue distribution, expressed in red blood cells. Expressed in placenta (labyrinthine trophoblasts).

The enzyme catalyses (2R)-3-phospho-glyceroyl phosphate = (2R)-2,3-bisphosphoglycerate + H(+). It catalyses the reaction (2R)-2-phosphoglycerate = (2R)-3-phosphoglycerate. Its activity is regulated as follows. At alkaline pH BPGM favors the synthase reaction; however, at lower pH the phosphatase reaction is dominant. Inhibited by citrate. Plays a major role in regulating hemoglobin oxygen affinity by controlling the levels of its allosteric effector 2,3-bisphosphoglycerate (2,3-BPG). Also exhibits mutase (EC 5.4.2.11) activity. In Mus musculus (Mouse), this protein is Bisphosphoglycerate mutase (Bpgm).